A 289-amino-acid polypeptide reads, in one-letter code: 4-diphosphocytidyl-2-C-methyl-D-erythritol kinase (289 aa).

Residue Lys11 is part of the active site. Position 93–103 (93–103 (PLAAGLAGGSA)) interacts with ATP. Asp135 is an active-site residue.

The protein belongs to the GHMP kinase family. IspE subfamily.

It carries out the reaction 4-CDP-2-C-methyl-D-erythritol + ATP = 4-CDP-2-C-methyl-D-erythritol 2-phosphate + ADP + H(+). Its pathway is isoprenoid biosynthesis; isopentenyl diphosphate biosynthesis via DXP pathway; isopentenyl diphosphate from 1-deoxy-D-xylulose 5-phosphate: step 3/6. Its function is as follows. Catalyzes the phosphorylation of the position 2 hydroxy group of 4-diphosphocytidyl-2C-methyl-D-erythritol. This chain is 4-diphosphocytidyl-2-C-methyl-D-erythritol kinase, found in Thermoanaerobacter pseudethanolicus (strain ATCC 33223 / 39E) (Clostridium thermohydrosulfuricum).